Here is a 247-residue protein sequence, read N- to C-terminus: Adenosylcobinamide-GDP ribazoletransferase (247 aa).

Helical transmembrane passes span 34–54 (IITFPLIGLLLGAISGLVFMV), 59–79 (CGAPLAALFSVLVLVLMTGGF), 113–133 (GGLALIFVVLAKILVLSELAL), 138–158 (ILASLAAACAISRGTAALLMY), and 194–214 (VLLPGMHGVAAMVVTMVAIFI).

Belongs to the CobS family. The cofactor is Mg(2+).

The protein resides in the cell inner membrane. The enzyme catalyses alpha-ribazole + adenosylcob(III)inamide-GDP = adenosylcob(III)alamin + GMP + H(+). It catalyses the reaction alpha-ribazole 5'-phosphate + adenosylcob(III)inamide-GDP = adenosylcob(III)alamin 5'-phosphate + GMP + H(+). It participates in cofactor biosynthesis; adenosylcobalamin biosynthesis; adenosylcobalamin from cob(II)yrinate a,c-diamide: step 7/7. In terms of biological role, joins adenosylcobinamide-GDP and alpha-ribazole to generate adenosylcobalamin (Ado-cobalamin). Also synthesizes adenosylcobalamin 5'-phosphate from adenosylcobinamide-GDP and alpha-ribazole 5'-phosphate. This is Adenosylcobinamide-GDP ribazoletransferase from Escherichia coli O45:K1 (strain S88 / ExPEC).